Reading from the N-terminus, the 67-residue chain is Protein C' (67 aa).

This sequence belongs to the rhabdoviruses C protein family.

Its function is as follows. Seems to stimulates transcription by the viral polymerase. May play a role in viral pathogenesis or transmission by insects vectors. This is Protein C' (P) from Aedes (Bovine).